Here is a 36-residue protein sequence, read N- to C-terminus: Thrombin (36 aa).

The 18-residue stretch at 19–36 (IVKGIDAEVASAPMQVML) folds into the Peptidase S1 domain.

It belongs to the peptidase S1 family. As to quaternary structure, forms a heterodimer with SERPINA5. Post-translationally, the gamma-carboxyglutamyl residues, which bind calcium ions, result from the carboxylation of glutamyl residues by a microsomal enzyme, the vitamin K-dependent carboxylase. The modified residues are necessary for the calcium-dependent interaction with a negatively charged phospholipid surface, which is essential for the conversion of prothrombin to thrombin. N-glycosylated. In terms of tissue distribution, expressed by the liver and secreted in plasma.

It is found in the secreted. It catalyses the reaction Selective cleavage of Arg-|-Gly bonds in fibrinogen to form fibrin and release fibrinopeptides A and B.. With respect to regulation, inhibited by SERPINA5. Its function is as follows. Thrombin, which cleaves bonds after Arg and Lys, converts fibrinogen to fibrin and activates factors V, VII, VIII, XIII, and, in complex with thrombomodulin, protein C. Functions in blood homeostasis, inflammation and wound healing. The polypeptide is Thrombin (Salmo salar (Atlantic salmon)).